Here is a 1014-residue protein sequence, read N- to C-terminus: Disease resistance protein RGA4 (1014 aa).

The interval 1–182 (MEAALLSGFI…PRIHEADLVG (182 aa)) is structured coiled coil (CC) domain. Positions 105–145 (RTVRATKKLLQTNQHLAQELQRLKRMVEEANQRKQRYTAAA) form a coiled coil. The NB-ARC domain occupies 189 to 466 (ELLEQLAERQ…WLAEGFVEPV (278 aa)). LRR repeat units lie at residues 484–506 (RNIIEPINVSNNDKVKTCQTYGM), 507–530 (MREFISHMSISQNFVTFFCDDKFL), 531–552 (PKYVRRLSLHGDTVVNGDNFNG), 580–602 (LRVLDLEKCDDLNDDHLKEICNL), 603–624 (VLLKYLSLGGNISKLPKDIAKL), 625–647 (KDLEALDVRRSKVKIMPVEVFGL), 701–725 (MNKLRKLKIWCTSSAGSTDWTDLRE), 762–784 (PCYLSSLKLHGNFPQLPQFVTSL), 785–807 (RGLKELCLSSTKFTTGLLEALSN), 808–833 (LSYLQYLKLVADELEKFIIKVQGFPR), and 854–877 (LPFLVTLQLLCKDLHGLSDIKIEC).

It belongs to the disease resistance NB-LRR family. Expressed in leaves.

In terms of biological role, probable disease resistance protein. Resistance proteins guard the plant against pathogens that contain an appropriate avirulence protein via an indirect interaction with this avirulence protein. That triggers a defense system including the hypersensitive response, which restricts the pathogen growth. At the opposite of cultivars Aichi asahi and Sasanishiki, the cultivars Nipponbare, Mokoto and Hitomebore don't recognize the effector avirulence protein AVR-Pia from M.oryzae. The polypeptide is Disease resistance protein RGA4 (Oryza sativa subsp. japonica (Rice)).